The primary structure comprises 516 residues: Rho guanine nucleotide exchange factor 9 (516 aa).

The SH3 domain maps to 8-67 (DSIVSAEAVWDHVTMANRELAFKAGDVIKVLDASNKDWWWGQIDDEEGWFPASFVRLWVN). Residues 100–110 (RDQMRANVINE) form an interaction with GPHN region. The DH domain occupies 103 to 287 (MRANVINEIM…RNVTQQINER (185 aa)). The PH domain occupies 318–425 (ELIYTGEMAW…WLRAFREERK (108 aa)). The disordered stretch occupies residues 450 to 480 (RKASKQKGVNSARSVPPSYPPPQDPLNQGQY). At serine 502 the chain carries Phosphoserine.

As to quaternary structure, interacts with GPHN. Detected in embryonic and adult brain.

The protein localises to the cytoplasm. It is found in the postsynaptic density. Its function is as follows. Acts as a guanine nucleotide exchange factor (GEF) for CDC42. Promotes formation of GPHN clusters. The sequence is that of Rho guanine nucleotide exchange factor 9 (Arhgef9) from Mus musculus (Mouse).